A 482-amino-acid chain; its full sequence is Ubiquitin carboxyl-terminal hydrolase MINDY-1 (482 aa).

The tract at residues 1 to 119 (MEQPQAECPA…RPQQLPQSPR (119 aa)) is disordered. Basic and acidic residues predominate over residues 21 to 66 (ESEKHEALSGPEKHPQDKDGADAAPEKHPQDKDGADAHGEAGKQKS). Over residues 82–94 (CPPPEASSSPPGP) the composition is skewed to pro residues. A compositionally biased stretch (polar residues) spans 106-119 (EACSRPQQLPQSPR). The residue at position 117 (Ser117) is a Phosphoserine. Cys151 functions as the Nucleophile in the catalytic mechanism. His333 functions as the Proton acceptor in the catalytic mechanism. The ubiquitin-binding domain (UBD) stretch occupies residues 402–441 (QVDQDYLIALSLQQQQQPQGMLGLSDLELAQQLQQEEYQQ). Over residues 437–446 (EEYQQQQAVQ) the composition is skewed to low complexity. A disordered region spans residues 437-482 (EEYQQQQAVQPVRTRAPSSPGRGATSGRPAGERRQRSKTESDCVLL). At Ser454 the chain carries Phosphoserine. Over residues 466–482 (AGERRQRSKTESDCVLL) the composition is skewed to basic and acidic residues.

This sequence belongs to the MINDY deubiquitinase family. FAM63 subfamily.

It catalyses the reaction Thiol-dependent hydrolysis of ester, thioester, amide, peptide and isopeptide bonds formed by the C-terminal Gly of ubiquitin (a 76-residue protein attached to proteins as an intracellular targeting signal).. In terms of biological role, hydrolase that can specifically remove 'Lys-48'-linked conjugated ubiquitin from proteins. Has exodeubiquitinase activity and has a preference for long polyubiquitin chains. May play a regulatory role at the level of protein turnover. This Rattus norvegicus (Rat) protein is Ubiquitin carboxyl-terminal hydrolase MINDY-1 (Mindy1).